The sequence spans 140 residues: Fatty acid-binding protein 12 (140 aa).

A fatty acid-binding positions include arginine 107 and 127–129 (RTY).

This sequence belongs to the calycin superfamily. Fatty-acid binding protein (FABP) family. As to expression, expressed in a number of retinoblastoma cell lines.

May play a role in lipid transport. This chain is Fatty acid-binding protein 12 (FABP12), found in Homo sapiens (Human).